The primary structure comprises 432 residues: Putative D-alanyl-D-alanine carboxypeptidase (432 aa).

The helical; Signal-anchor transmembrane segment at 7 to 25 (ATVLLTFSLSAFAVEYPVL) threads the bilayer.

Belongs to the peptidase S12 family. YfeW subfamily.

Its subcellular location is the cell inner membrane. It catalyses the reaction Preferential cleavage: (Ac)2-L-Lys-D-Ala-|-D-Ala. Also transpeptidation of peptidyl-alanyl moieties that are N-acyl substituents of D-alanine.. The sequence is that of Putative D-alanyl-D-alanine carboxypeptidase from Salmonella schwarzengrund (strain CVM19633).